A 291-amino-acid polypeptide reads, in one-letter code: Pantothenate synthetase (291 aa).

30 to 37 (MGYLHAGH) lines the ATP pocket. H37 serves as the catalytic Proton donor. Residue Q61 participates in (R)-pantoate binding. Q61 contacts beta-alanine. An ATP-binding site is contributed by 147-150 (GEKD). Position 153 (Q153) interacts with (R)-pantoate. ATP is bound by residues V176 and 184-187 (LSSR).

This sequence belongs to the pantothenate synthetase family. Homodimer.

It is found in the cytoplasm. The catalysed reaction is (R)-pantoate + beta-alanine + ATP = (R)-pantothenate + AMP + diphosphate + H(+). Its pathway is cofactor biosynthesis; (R)-pantothenate biosynthesis; (R)-pantothenate from (R)-pantoate and beta-alanine: step 1/1. Its function is as follows. Catalyzes the condensation of pantoate with beta-alanine in an ATP-dependent reaction via a pantoyl-adenylate intermediate. The chain is Pantothenate synthetase from Rhizobium rhizogenes (strain K84 / ATCC BAA-868) (Agrobacterium radiobacter).